The sequence spans 134 residues: MSEREVLQKINSPEGKEDRIIGKHVFGNLYDIDAERLNDKEFLEKLVLEAVDIAHMKLVEIKAWSFGGKKGGVSVIALVEESHIALHTWNEYNYATLDVYTCGEDSDPQSAFAHIVNALNPKRYQMFYADRSSQ.

Serine 82 serves as the catalytic Schiff-base intermediate with substrate; via pyruvic acid. At serine 82 the chain carries Pyruvic acid (Ser); by autocatalysis. Histidine 87 acts as the Proton acceptor; for processing activity in catalysis. The Proton donor; for catalytic activity role is filled by cysteine 102.

The protein belongs to the prokaryotic AdoMetDC family. Type 1 subfamily. As to quaternary structure, heterooctamer of four alpha and four beta chains arranged as a tetramer of alpha/beta heterodimers. The cofactor is pyruvate. Is synthesized initially as an inactive proenzyme. Formation of the active enzyme involves a self-maturation process in which the active site pyruvoyl group is generated from an internal serine residue via an autocatalytic post-translational modification. Two non-identical subunits are generated from the proenzyme in this reaction, and the pyruvate is formed at the N-terminus of the alpha chain, which is derived from the carboxyl end of the proenzyme. The post-translation cleavage follows an unusual pathway, termed non-hydrolytic serinolysis, in which the side chain hydroxyl group of the serine supplies its oxygen atom to form the C-terminus of the beta chain, while the remainder of the serine residue undergoes an oxidative deamination to produce ammonia and the pyruvoyl group blocking the N-terminus of the alpha chain.

It carries out the reaction L-arginine + H(+) = agmatine + CO2. Its pathway is amine and polyamine biosynthesis; agmatine biosynthesis; agmatine from L-arginine: step 1/1. Its activity is regulated as follows. Highly competitively inhibited by L-argininamide and L-arginine methyl ester. Also inhibited by alpha-difluoromethylarginine. Is not stimulated by potassium chloride as observed for other decarboxylases. Specifically catalyzes the decarboxylation of L-arginine to agmatine. Is also able to decarboxylate L-canavanine, although less efficiently. Has no S-adenosylmethionine decarboxylase (AdoMetDC) activity. This chain is Arginine decarboxylase proenzyme, found in Saccharolobus solfataricus (strain ATCC 35092 / DSM 1617 / JCM 11322 / P2) (Sulfolobus solfataricus).